The chain runs to 433 residues: Serine/threonine-protein kinase DCLK1 (433 aa).

Residues 1 to 74 (MLELIEVNGT…GEEESDEGFQ (74 aa)) are disordered. Serine 23, serine 25, serine 27, serine 30, serine 40, serine 45, serine 46, serine 48, serine 57, and serine 69 each carry phosphoserine. Low complexity predominate over residues 40–57 (SQHGGSSTSLSSTKVCSS). Positions 59 to 71 (DENDGPGEEESDE) are enriched in acidic residues. In terms of domain architecture, Protein kinase spans 83–340 (YKVGRTIGDG…AVQVLEHPWV (258 aa)). ATP is bound by residues 89 to 97 (IGDGNFAVV) and lysine 112. The active-site Proton acceptor is aspartate 204. Tyrosine 213 is modified (phosphotyrosine). The segment covering 388-400 (QVFRRRRNQDVRG) has biased composition (basic and acidic residues). The tract at residues 388-433 (QVFRRRRNQDVRGRYKAQPAPPELNSESEDYSPSSSETVRSPNSPF) is disordered. Serine 419, serine 428, and serine 431 each carry phosphoserine.

Belongs to the protein kinase superfamily. CAMK Ser/Thr protein kinase family. CaMK subfamily.

It catalyses the reaction L-seryl-[protein] + ATP = O-phospho-L-seryl-[protein] + ADP + H(+). It carries out the reaction L-threonyl-[protein] + ATP = O-phospho-L-threonyl-[protein] + ADP + H(+). In terms of biological role, probable kinase that may be involved in a calcium-signaling pathway controlling neuronal migration in the developing brain. May also participate in functions of the mature nervous system. The protein is Serine/threonine-protein kinase DCLK1 (Dclk1) of Rattus norvegicus (Rat).